The sequence spans 157 residues: SsrA-binding protein (157 aa).

It belongs to the SmpB family.

The protein localises to the cytoplasm. Functionally, required for rescue of stalled ribosomes mediated by trans-translation. Binds to transfer-messenger RNA (tmRNA), required for stable association of tmRNA with ribosomes. tmRNA and SmpB together mimic tRNA shape, replacing the anticodon stem-loop with SmpB. tmRNA is encoded by the ssrA gene; the 2 termini fold to resemble tRNA(Ala) and it encodes a 'tag peptide', a short internal open reading frame. During trans-translation Ala-aminoacylated tmRNA acts like a tRNA, entering the A-site of stalled ribosomes, displacing the stalled mRNA. The ribosome then switches to translate the ORF on the tmRNA; the nascent peptide is terminated with the 'tag peptide' encoded by the tmRNA and targeted for degradation. The ribosome is freed to recommence translation, which seems to be the essential function of trans-translation. In Lacticaseibacillus paracasei (strain ATCC 334 / BCRC 17002 / CCUG 31169 / CIP 107868 / KCTC 3260 / NRRL B-441) (Lactobacillus paracasei), this protein is SsrA-binding protein.